The sequence spans 90 residues: uncharacterized protein (90 aa).

Residues 12 to 32 (VVGGLSFWSFSAGVIMIVNAF) form a helical membrane-spanning segment.

The protein localises to the membrane. This is an uncharacterized protein from Mycoplasma pneumoniae (strain ATCC 29342 / M129 / Subtype 1) (Mycoplasmoides pneumoniae).